We begin with the raw amino-acid sequence, 177 residues long: Probable chemoreceptor glutamine deamidase CheD (177 aa).

It belongs to the CheD family.

It catalyses the reaction L-glutaminyl-[protein] + H2O = L-glutamyl-[protein] + NH4(+). In terms of biological role, probably deamidates glutamine residues to glutamate on methyl-accepting chemotaxis receptors (MCPs), playing an important role in chemotaxis. The chain is Probable chemoreceptor glutamine deamidase CheD from Pseudomonas syringae pv. syringae (strain B728a).